A 304-amino-acid polypeptide reads, in one-letter code: Non-specific ribonucleoside hydrolase RihC (304 aa).

The active site involves histidine 233.

This sequence belongs to the IUNH family. RihC subfamily.

In terms of biological role, hydrolyzes both purine and pyrimidine ribonucleosides with a broad-substrate specificity. The chain is Non-specific ribonucleoside hydrolase RihC from Escherichia fergusonii (strain ATCC 35469 / DSM 13698 / CCUG 18766 / IAM 14443 / JCM 21226 / LMG 7866 / NBRC 102419 / NCTC 12128 / CDC 0568-73).